We begin with the raw amino-acid sequence, 831 residues long: Translation initiation factor IF-2 (831 aa).

Residues 1-11 show a composition bias toward basic and acidic residues; the sequence is MADEIKKENAP. Positions 1-236 are disordered; that stretch reads MADEIKKENA…GKHAKKASAL (236 aa). A compositionally biased stretch (low complexity) spans 22 to 31; it reads TTVSGTSTTG. Basic and acidic residues-rich tracts occupy residues 49-150 and 157-166; these read DLER…RYAD and DNGKLDDYSD. Positions 190 to 200 are enriched in basic residues; sequence RSKNKVVKAKK. The segment covering 201–225 has biased composition (basic and acidic residues); sequence GGRDDENGNKNERQSDRRNQKDVKG. In terms of domain architecture, tr-type G spans 330-500; that stretch reads HRAPVVTIMG…LLQSEVLELT (171 aa). Residues 339–346 are G1; sequence GHVDHGKT. 339–346 serves as a coordination point for GTP; the sequence is GHVDHGKT. Positions 364–368 are G2; it reads GITQH. Residues 386–389 form a G3 region; that stretch reads DTPG. GTP-binding positions include 386–390 and 440–443; these read DTPGH and NKID. A G4 region spans residues 440–443; the sequence is NKID. The interval 476 to 478 is G5; sequence SAK.

It belongs to the TRAFAC class translation factor GTPase superfamily. Classic translation factor GTPase family. IF-2 subfamily.

The protein resides in the cytoplasm. Functionally, one of the essential components for the initiation of protein synthesis. Protects formylmethionyl-tRNA from spontaneous hydrolysis and promotes its binding to the 30S ribosomal subunits. Also involved in the hydrolysis of GTP during the formation of the 70S ribosomal complex. The protein is Translation initiation factor IF-2 of Histophilus somni (strain 2336) (Haemophilus somnus).